The chain runs to 92 residues: MLTINSDAKLKDLLEFPCSFTYKVMGHAKPELPELVLEVIQRHAPGDYSPKVKPSAKGNYHSVSINITATSIEQVETLYKELGEIDIVRMVL.

This sequence belongs to the UPF0250 family.

The chain is UPF0250 protein VP0718 from Vibrio parahaemolyticus serotype O3:K6 (strain RIMD 2210633).